The sequence spans 264 residues: Nicotinamide N-methyltransferase (264 aa).

Position 18 is a citrulline; alternate (R18). 2 residues coordinate S-adenosyl-L-methionine: Y20 and Y25. At K39 the chain carries N6-acetyllysine. S-adenosyl-L-methionine is bound by residues G63, Y69, D85, and N90. Position 132 is a citrulline; alternate (R132). S-adenosyl-L-methionine is bound by residues 142–143 and T163; that span reads DV. At R181 the chain carries Citrulline; alternate. Positions 197 and 213 each coordinate nicotinamide.

This sequence belongs to the class I-like SAM-binding methyltransferase superfamily. NNMT/PNMT/TEMT family. Monomer. Post-translationally, deiminated by PADI1 and PADI2. Predominantly expressed in the liver. A lower expression is seen in the kidney, lung, skeletal muscle, placenta and heart. Not detected in the brain or pancreas.

Its subcellular location is the cytoplasm. The catalysed reaction is nicotinamide + S-adenosyl-L-methionine = 1-methylnicotinamide + S-adenosyl-L-homocysteine. It participates in cofactor metabolism. The protein operates within amino-acid degradation. Its activity is regulated as follows. Inactivated by deimination on Arg-132. Functionally, catalyzes the N-methylation of nicotinamide using the universal methyl donor S-adenosyl-L-methionine to form N1-methylnicotinamide and S-adenosyl-L-homocysteine, a predominant nicotinamide/vitamin B3 clearance pathway. Plays a central role in regulating cellular methylation potential, by consuming S-adenosyl-L-methionine and limiting its availability for other methyltransferases. Actively mediates genome-wide epigenetic and transcriptional changes through hypomethylation of repressive chromatin marks, such as H3K27me3. In a developmental context, contributes to low levels of the repressive histone marks that characterize pluripotent embryonic stem cell pre-implantation state. Acts as a metabolic regulator primarily on white adipose tissue energy expenditure as well as hepatic gluconeogenesis and cholesterol biosynthesis. In white adipocytes, regulates polyamine flux by consuming S-adenosyl-L-methionine which provides for propylamine group in polyamine biosynthesis, whereas by consuming nicotinamide controls NAD(+) levels through the salvage pathway. Via its product N1-methylnicotinamide regulates protein acetylation in hepatocytes, by repressing the ubiquitination and increasing the stability of SIRT1 deacetylase. Can also N-methylate other pyridines structurally related to nicotinamide and play a role in xenobiotic detoxification. In Homo sapiens (Human), this protein is Nicotinamide N-methyltransferase.